An 821-amino-acid chain; its full sequence is Calpain-3 (821 aa).

The disordered stretch occupies residues 7–37; sequence ASVAPRTAAEPRSPGPVPHPAQSKATEAGGG. A Calpain catalytic domain is found at 74–417; it reads LYVDPEFPPD…FTKLEICNLT (344 aa). Residues cysteine 129, histidine 334, and asparagine 358 contribute to the active site. A domain III region spans residues 418–586; sequence ADALQSDKLQ…KRNLSEEVEN (169 aa). The segment at 587 to 649 is linker; sequence TISVDRPVKK…QPGSSDQESE (63 aa). The tract at residues 609-652 is disordered; the sequence is ANSNKELGVDQESEEGKGKTSPDKQKQSPQPQPGSSDQESEEQQ. Over residues 622–634 the composition is skewed to basic and acidic residues; the sequence is EEGKGKTSPDKQK. Residues 635 to 645 are compositionally biased toward low complexity; the sequence is QSPQPQPGSSD. EF-hand domains follow at residues 649 to 683, 692 to 725, 722 to 757, and 787 to 821; these read EEQQQFRNIFKQIAGDDMEICADELKKVLNTVVNK, FTLESCRSMIALMDTDGSGKLNLQEFHHLWNKIK, NKIKAWQKIFKHYDTDQSGTINSYEMRNAVNDAGFH, and VRLEGMFRAFHAFDKDGDGIIKLNVLEWLQLTMYA. Residues 650–821 are domain IV; sequence EQQQFRNIFK…LEWLQLTMYA (172 aa). Positions 662, 665, 667, 672, 705, 707, 709, 711, 716, 735, 737, 739, 741, 746, 800, 802, 804, and 806 each coordinate Ca(2+).

It belongs to the peptidase C2 family. Homodimer; via EF-hand domain 4. Interacts with TTN/titin. Interacts with CMYA5; this interaction, which results in CMYA5 proteolysis, may protect CAPN3 from autolysis. Interacts with SIMC1. Interacts with UTP25; the interaction is required for CAPN3 translocation to the nucleolus. In terms of tissue distribution, isoform I is skeletal muscle specific.

The protein resides in the cytoplasm. The protein localises to the nucleus. It is found in the nucleolus. The enzyme catalyses Broad endopeptidase activity.. Activated by micromolar concentrations of calcium and inhibited by calpastatin. In terms of biological role, calcium-regulated non-lysosomal thiol-protease. Proteolytically cleaves CTBP1 at 'His-409'. Mediates, with UTP25, the proteasome-independent degradation of p53/TP53. The chain is Calpain-3 from Homo sapiens (Human).